Consider the following 461-residue polypeptide: GTPase Der (461 aa).

2 consecutive EngA-type G domains span residues 3-167 (PQVI…GEKQ) and 190-371 (LKLA…AAWS). Residues 9 to 16 (GRPNVGKS), 56 to 60 (DTAGW), 119 to 122 (NKAE), 196 to 203 (GRPNAGKS), 249 to 253 (DTAGM), and 314 to 317 (NKWD) each bind GTP. One can recognise a KH-like domain in the interval 372–456 (KRVPTAALNR…PIRLTLRSPK (85 aa)).

Belongs to the TRAFAC class TrmE-Era-EngA-EngB-Septin-like GTPase superfamily. EngA (Der) GTPase family. As to quaternary structure, associates with the 50S ribosomal subunit.

Functionally, GTPase that plays an essential role in the late steps of ribosome biogenesis. The polypeptide is GTPase Der (Novosphingobium aromaticivorans (strain ATCC 700278 / DSM 12444 / CCUG 56034 / CIP 105152 / NBRC 16084 / F199)).